Reading from the N-terminus, the 101-residue chain is uncharacterized protein (101 aa).

The protein localises to the mitochondrion. This is an uncharacterized protein from Arabidopsis thaliana (Mouse-ear cress).